Here is a 226-residue protein sequence, read N- to C-terminus: UPF0758 protein LL1007 (226 aa).

Residues 103 to 225 (QVLSSREYGL…YFSFREEEIR (123 aa)) form the MPN domain. Zn(2+) is bound by residues His174, His176, and Asp187. Residues 174-187 (HNHPSGNLKPSQAD) carry the JAMM motif motif.

The protein belongs to the UPF0758 family.

The protein is UPF0758 protein LL1007 of Lactococcus lactis subsp. lactis (strain IL1403) (Streptococcus lactis).